Reading from the N-terminus, the 438-residue chain is Serine hydroxymethyltransferase (438 aa).

Residues Leu133 and 137–139 (GHL) contribute to the (6S)-5,6,7,8-tetrahydrofolate site. Position 242 is an N6-(pyridoxal phosphate)lysine (Lys242).

Belongs to the SHMT family. As to quaternary structure, homodimer. It depends on pyridoxal 5'-phosphate as a cofactor.

Its subcellular location is the cytoplasm. It catalyses the reaction (6R)-5,10-methylene-5,6,7,8-tetrahydrofolate + glycine + H2O = (6S)-5,6,7,8-tetrahydrofolate + L-serine. The protein operates within one-carbon metabolism; tetrahydrofolate interconversion. Its pathway is amino-acid biosynthesis; glycine biosynthesis; glycine from L-serine: step 1/1. In terms of biological role, catalyzes the reversible interconversion of serine and glycine with tetrahydrofolate (THF) serving as the one-carbon carrier. This reaction serves as the major source of one-carbon groups required for the biosynthesis of purines, thymidylate, methionine, and other important biomolecules. Also exhibits THF-independent aldolase activity toward beta-hydroxyamino acids, producing glycine and aldehydes, via a retro-aldol mechanism. This Brucella canis (strain ATCC 23365 / NCTC 10854 / RM-666) protein is Serine hydroxymethyltransferase.